We begin with the raw amino-acid sequence, 122 residues long: Big defensin (122 aa).

The signal sequence occupies residues 1-28 (MTRPSLVRCYSLFFTALIVMAIICPAWS). Positions 29-34 (EEIPKS) are excised as a propeptide. Disulfide bonds link Cys-88–Cys-119, Cys-95–Cys-114, and Cys-99–Cys-120.

This sequence belongs to the big defensin family. In terms of tissue distribution, expressed in hemocytes.

The protein localises to the secreted. In terms of biological role, significantly inhibits the growth of Gram-negative and Gram-positive bacteria and fungi in vitro. In Argopecten irradians (Bay scallop), this protein is Big defensin.